The following is a 419-amino-acid chain: Nodulation protein NoeE (419 aa).

In terms of biological role, required for the formation of sulfated nod factor. Proposed to transfer activated sulfate (PAPS) to the fucose of the nod factor. This chain is Nodulation protein NoeE (noeE), found in Sinorhizobium fredii (strain NBRC 101917 / NGR234).